The sequence spans 273 residues: Zinc finger protein 80 (273 aa).

The segment at 49 to 71 adopts a C2H2-type 1 zinc-finger fold; the sequence is YKCKECGSVFNKNSLLVRHQQIH. Residues 77–99 form a C2H2-type 2; degenerate zinc finger; the sequence is YEYQECGKAFPEKVDFVRHMRIH. The C2H2-type 3; atypical zinc-finger motif lies at 105–127; it reads CKCVECRKVFNRRSHLLCYRQIH. 4 consecutive C2H2-type zinc fingers follow at residues 133 to 155, 161 to 183, 187 to 211, and 217 to 239; these read YECSECGKTFSYHSVFIQHRVTH, FGCKECGKTFYYNSSLTRHMKIH, KPCKCSECGKTFTYHSVFFRHSMTH, and YECKECGKGFYYSYSLTRHTRSH.

The protein belongs to the krueppel C2H2-type zinc-finger protein family.

Its subcellular location is the nucleus. Its function is as follows. May be involved in transcriptional regulation. This is Zinc finger protein 80 (ZNF80) from Pan troglodytes (Chimpanzee).